A 1267-amino-acid polypeptide reads, in one-letter code: DNA-directed RNA polymerase subunit beta (1267 aa).

Belongs to the RNA polymerase beta chain family. In terms of assembly, the RNAP catalytic core consists of 2 alpha, 1 beta, 1 beta' and 1 omega subunit. When a sigma factor is associated with the core the holoenzyme is formed, which can initiate transcription.

It catalyses the reaction RNA(n) + a ribonucleoside 5'-triphosphate = RNA(n+1) + diphosphate. DNA-dependent RNA polymerase catalyzes the transcription of DNA into RNA using the four ribonucleoside triphosphates as substrates. The sequence is that of DNA-directed RNA polymerase subunit beta (rpoB) from Carsonella ruddii (strain PV).